The chain runs to 464 residues: Asparagine--tRNA ligase (464 aa).

The protein belongs to the class-II aminoacyl-tRNA synthetase family. In terms of assembly, homodimer.

Its subcellular location is the cytoplasm. It catalyses the reaction tRNA(Asn) + L-asparagine + ATP = L-asparaginyl-tRNA(Asn) + AMP + diphosphate + H(+). This Cytophaga hutchinsonii (strain ATCC 33406 / DSM 1761 / CIP 103989 / NBRC 15051 / NCIMB 9469 / D465) protein is Asparagine--tRNA ligase.